A 101-amino-acid chain; its full sequence is NADH-quinone oxidoreductase subunit K (101 aa).

The next 3 helical transmembrane spans lie at 4 to 24 (LGHLLVLGAALFCISLAGIFL), 30 to 50 (IVLLMSIELMLLAVNVNFIAF), and 62 to 82 (FVFFILTVAAAEAAIGLAILV).

The protein belongs to the complex I subunit 4L family. As to quaternary structure, NDH-1 is composed of 14 different subunits. Subunits NuoA, H, J, K, L, M, N constitute the membrane sector of the complex.

Its subcellular location is the cell inner membrane. It catalyses the reaction a quinone + NADH + 5 H(+)(in) = a quinol + NAD(+) + 4 H(+)(out). NDH-1 shuttles electrons from NADH, via FMN and iron-sulfur (Fe-S) centers, to quinones in the respiratory chain. The immediate electron acceptor for the enzyme in this species is believed to be ubiquinone. Couples the redox reaction to proton translocation (for every two electrons transferred, four hydrogen ions are translocated across the cytoplasmic membrane), and thus conserves the redox energy in a proton gradient. The sequence is that of NADH-quinone oxidoreductase subunit K from Xylella fastidiosa (strain 9a5c).